A 275-amino-acid chain; its full sequence is 3-methyl-2-oxobutanoate hydroxymethyltransferase (275 aa).

Mg(2+) is bound by residues Asp49 and Asp88. Residues 49 to 50 (DS), Asp88, and Lys118 contribute to the 3-methyl-2-oxobutanoate site. Residue Glu120 coordinates Mg(2+). The Proton acceptor role is filled by Glu187.

It belongs to the PanB family. Homodecamer; pentamer of dimers. Requires Mg(2+) as cofactor.

It is found in the cytoplasm. The enzyme catalyses 3-methyl-2-oxobutanoate + (6R)-5,10-methylene-5,6,7,8-tetrahydrofolate + H2O = 2-dehydropantoate + (6S)-5,6,7,8-tetrahydrofolate. It participates in cofactor biosynthesis; (R)-pantothenate biosynthesis; (R)-pantoate from 3-methyl-2-oxobutanoate: step 1/2. Its function is as follows. Catalyzes the reversible reaction in which hydroxymethyl group from 5,10-methylenetetrahydrofolate is transferred onto alpha-ketoisovalerate to form ketopantoate. The protein is 3-methyl-2-oxobutanoate hydroxymethyltransferase of Brucella melitensis biotype 1 (strain ATCC 23456 / CCUG 17765 / NCTC 10094 / 16M).